Reading from the N-terminus, the 216-residue chain is Dephospho-CoA kinase (216 aa).

The DPCK domain occupies 18 to 216 (IIGVIGPPCS…SELASVLQSK (199 aa)). 26–31 (CSGKST) is an ATP binding site.

It belongs to the CoaE family.

It localises to the cytoplasm. It carries out the reaction 3'-dephospho-CoA + ATP = ADP + CoA + H(+). Its pathway is cofactor biosynthesis; coenzyme A biosynthesis; CoA from (R)-pantothenate: step 5/5. Catalyzes the phosphorylation of the 3'-hydroxyl group of dephosphocoenzyme A to form coenzyme A. This is Dephospho-CoA kinase from Rhodopirellula baltica (strain DSM 10527 / NCIMB 13988 / SH1).